A 319-amino-acid polypeptide reads, in one-letter code: Acetyl-coenzyme A carboxylase carboxyl transferase subunit alpha (319 aa).

Positions 35-296 (NIDEEVHRLR…KAQLLTDLAD (262 aa)) constitute a CoA carboxyltransferase C-terminal domain.

This sequence belongs to the AccA family. In terms of assembly, acetyl-CoA carboxylase is a heterohexamer composed of biotin carboxyl carrier protein (AccB), biotin carboxylase (AccC) and two subunits each of ACCase subunit alpha (AccA) and ACCase subunit beta (AccD).

It localises to the cytoplasm. The enzyme catalyses N(6)-carboxybiotinyl-L-lysyl-[protein] + acetyl-CoA = N(6)-biotinyl-L-lysyl-[protein] + malonyl-CoA. It functions in the pathway lipid metabolism; malonyl-CoA biosynthesis; malonyl-CoA from acetyl-CoA: step 1/1. In terms of biological role, component of the acetyl coenzyme A carboxylase (ACC) complex. First, biotin carboxylase catalyzes the carboxylation of biotin on its carrier protein (BCCP) and then the CO(2) group is transferred by the carboxyltransferase to acetyl-CoA to form malonyl-CoA. This chain is Acetyl-coenzyme A carboxylase carboxyl transferase subunit alpha, found in Escherichia coli O45:K1 (strain S88 / ExPEC).